Here is a 212-residue protein sequence, read N- to C-terminus: Ras-related protein Rab-17 (212 aa).

Ser-29 carries the phosphoserine modification. Gly-31, Lys-32, Ser-33, and Thr-50 together coordinate GTP. Mg(2+)-binding residues include Ser-33, Thr-50, and Asp-73. The Switch 1 motif lies at 43–54 (DFKSILPTVGCA). Residues 75–91 (AGQEKYHSVCHLYFRGA) carry the Switch 2 motif. 5 residues coordinate GTP: Gly-76, Asn-132, Lys-133, Asp-135, and Ala-163. 2 S-geranylgeranyl cysteine lipidation sites follow: Cys-209 and Cys-210.

Belongs to the small GTPase superfamily. Rab family. Requires Mg(2+) as cofactor. Expressed in melanocytes (at protein level).

It is found in the recycling endosome membrane. The protein localises to the melanosome. The protein resides in the cell projection. Its subcellular location is the dendrite. It carries out the reaction GTP + H2O = GDP + phosphate + H(+). Its activity is regulated as follows. Regulated by guanine nucleotide exchange factors (GEFs) which promote the exchange of bound GDP for free GTP. Regulated by GTPase activating proteins (GAPs) which increase the GTP hydrolysis activity. Inhibited by GDP dissociation inhibitors (GDIs). Functionally, the small GTPases Rab are key regulators of intracellular membrane trafficking, from the formation of transport vesicles to their fusion with membranes. Rabs cycle between an inactive GDP-bound form and an active GTP-bound form that is able to recruit to membranes different set of downstream effectors directly responsible for vesicle formation, movement, tethering and fusion. RAB17 is involved in transcytosis, the directed movement of endocytosed material through the cell and its exocytosis from the plasma membrane at the opposite side. Mainly observed in epithelial cells, transcytosis mediates for instance, the transcellular transport of immunoglobulins from the basolateral surface to the apical surface. Most probably controls membrane trafficking through apical recycling endosomes in a post-endocytic step of transcytosis. Required for melanosome transport and release from melanocytes, it also regulates dendrite and dendritic spine development. May also play a role in cell migration. The chain is Ras-related protein Rab-17 from Homo sapiens (Human).